A 218-amino-acid polypeptide reads, in one-letter code: Elongation factor Ts (218 aa).

The tract at residues 82-85 (TDFV) is involved in Mg(2+) ion dislocation from EF-Tu.

The protein belongs to the EF-Ts family.

Its subcellular location is the cytoplasm. Associates with the EF-Tu.GDP complex and induces the exchange of GDP to GTP. It remains bound to the aminoacyl-tRNA.EF-Tu.GTP complex up to the GTP hydrolysis stage on the ribosome. The protein is Elongation factor Ts of Prochlorococcus marinus (strain AS9601).